The following is a 790-amino-acid chain: Pentatricopeptide repeat-containing protein At1g25360 (790 aa).

PPR repeat units lie at residues 48 to 82 (RAHI…DKIA), 84 to 109 (TTMV…APVC), 112 to 146 (DTVM…GFKP), 147 to 182 (DNFT…GAGY), 183 to 217 (ITSV…ILEK), 218 to 248 (DERS…MDDN), 250 to 284 (KLVA…GIEL), 285 to 315 (DEFT…VLRR), 319 to 349 (SFHF…MPAK), 350 to 384 (DLVS…NILS), 385 to 415 (WMIM…GFEP), 416 to 450 (CDYA…GFDS), 451 to 481 (SLSA…MPCL), 482 to 516 (DSVS…GIRP), 517 to 551 (DRIT…YRIP), and 553 to 583 (GADH…LPFK). The tract at residues 588 to 663 (IWEALLSGCR…EVACSWIEME (76 aa)) is type E motif. A type E(+) motif region spans residues 664–694 (TQVHTFLVDDTSHPEAEAVYIYLQDLGKEMR). The type DYW motif stretch occupies residues 695-790 (RLGYVPDTSF…NGECSCGNFW (96 aa)).

It belongs to the PPR family. PCMP-H subfamily.

This chain is Pentatricopeptide repeat-containing protein At1g25360 (PCMP-H74), found in Arabidopsis thaliana (Mouse-ear cress).